The sequence spans 337 residues: N-acetyl-gamma-glutamyl-phosphate reductase (337 aa).

C145 is a catalytic residue.

Belongs to the NAGSA dehydrogenase family. Type 1 subfamily.

It localises to the cytoplasm. It catalyses the reaction N-acetyl-L-glutamate 5-semialdehyde + phosphate + NADP(+) = N-acetyl-L-glutamyl 5-phosphate + NADPH + H(+). Its pathway is amino-acid biosynthesis; L-arginine biosynthesis; N(2)-acetyl-L-ornithine from L-glutamate: step 3/4. Its function is as follows. Catalyzes the NADPH-dependent reduction of N-acetyl-5-glutamyl phosphate to yield N-acetyl-L-glutamate 5-semialdehyde. In Methanosarcina barkeri (strain Fusaro / DSM 804), this protein is N-acetyl-gamma-glutamyl-phosphate reductase.